Here is a 383-residue protein sequence, read N- to C-terminus: Soluble hydrogenase 42 kDa subunit (383 aa).

Position 194 is an N6-(pyridoxal phosphate)lysine (K194).

This sequence belongs to the class-V pyridoxal-phosphate-dependent aminotransferase family. As to quaternary structure, heterodimer of a large and a small subunit. Pyridoxal 5'-phosphate serves as cofactor.

Its subcellular location is the cytoplasm. Functionally, soluble hydrogenase catalyzes both production and consumption of hydrogen from suitable artificial electron donors or acceptors. This subunit catalyzes the tritium-exchange activity. This chain is Soluble hydrogenase 42 kDa subunit, found in Anabaena cylindrica.